The primary structure comprises 163 residues: Nucleotide-binding protein ECA1137 (163 aa).

The protein belongs to the YajQ family.

In terms of biological role, nucleotide-binding protein. This is Nucleotide-binding protein ECA1137 from Pectobacterium atrosepticum (strain SCRI 1043 / ATCC BAA-672) (Erwinia carotovora subsp. atroseptica).